The chain runs to 166 residues: Chemoreceptor glutamine deamidase CheD (166 aa).

The protein belongs to the CheD family. In terms of assembly, forms a complex with CheC.

It carries out the reaction L-glutaminyl-[protein] + H2O = L-glutamyl-[protein] + NH4(+). Functionally, deamidates glutamine residues to glutamate on methyl-accepting chemotaxis receptors (MCPs). CheD-mediated MCP deamidation is required for productive communication of the conformational signals of the chemoreceptors to the CheA kinase. In Bacillus velezensis (strain DSM 23117 / BGSC 10A6 / LMG 26770 / FZB42) (Bacillus amyloliquefaciens subsp. plantarum), this protein is Chemoreceptor glutamine deamidase CheD.